The primary structure comprises 176 residues: Inner membrane-spanning protein YciB (176 aa).

A run of 5 helical transmembrane segments spans residues 3–23 (FLFD…WGIF), 49–69 (TMLW…LVLH), 72–92 (KFIQ…LVAA), 118–138 (KLNL…LYVV), and 149–169 (FKLF…SLWL).

Belongs to the YciB family.

It localises to the cell inner membrane. Its function is as follows. Plays a role in cell envelope biogenesis, maintenance of cell envelope integrity and membrane homeostasis. The protein is Inner membrane-spanning protein YciB of Burkholderia thailandensis (strain ATCC 700388 / DSM 13276 / CCUG 48851 / CIP 106301 / E264).